A 390-amino-acid chain; its full sequence is tRNA(Met) cytidine acetate ligase (390 aa).

ATP-binding positions include 7 to 20 (VVEYNPFHNGHKLH), G101, N162, and R187.

This sequence belongs to the TmcAL family.

It is found in the cytoplasm. It carries out the reaction cytidine(34) in elongator tRNA(Met) + acetate + ATP = N(4)-acetylcytidine(34) in elongator tRNA(Met) + AMP + diphosphate. In terms of biological role, catalyzes the formation of N(4)-acetylcytidine (ac(4)C) at the wobble position of elongator tRNA(Met), using acetate and ATP as substrates. First activates an acetate ion to form acetyladenylate (Ac-AMP) and then transfers the acetyl group to tRNA to form ac(4)C34. The chain is tRNA(Met) cytidine acetate ligase from Listeria monocytogenes serotype 4a (strain HCC23).